The primary structure comprises 204 residues: Glycerol-3-phosphate acyltransferase (204 aa).

5 helical membrane passes run L12–A32, W85–W105, M117–L137, I142–F162, and Q163–W183.

Belongs to the PlsY family. In terms of assembly, probably interacts with PlsX.

The protein resides in the cell inner membrane. The enzyme catalyses an acyl phosphate + sn-glycerol 3-phosphate = a 1-acyl-sn-glycero-3-phosphate + phosphate. It functions in the pathway lipid metabolism; phospholipid metabolism. In terms of biological role, catalyzes the transfer of an acyl group from acyl-phosphate (acyl-PO(4)) to glycerol-3-phosphate (G3P) to form lysophosphatidic acid (LPA). This enzyme utilizes acyl-phosphate as fatty acyl donor, but not acyl-CoA or acyl-ACP. This chain is Glycerol-3-phosphate acyltransferase, found in Prochlorococcus marinus (strain MIT 9313).